Reading from the N-terminus, the 395-residue chain is uncharacterized protein (395 aa).

The stretch at 182–238 (KKLEDILSTIAEIEDSIELEKILSLDQFLKSKLSNIKITNNQIDEAKAEFKEMFNKK) forms a coiled coil.

This is an uncharacterized protein from Acanthamoeba polyphaga (Amoeba).